Here is a 144-residue protein sequence, read N- to C-terminus: Large ribosomal subunit protein uL13 (144 aa).

This sequence belongs to the universal ribosomal protein uL13 family. Part of the 50S ribosomal subunit.

Functionally, this protein is one of the early assembly proteins of the 50S ribosomal subunit, although it is not seen to bind rRNA by itself. It is important during the early stages of 50S assembly. The polypeptide is Large ribosomal subunit protein uL13 (Ruminiclostridium cellulolyticum (strain ATCC 35319 / DSM 5812 / JCM 6584 / H10) (Clostridium cellulolyticum)).